The following is an 89-amino-acid chain: Mitochondrial import inner membrane translocase subunit Tim9 (89 aa).

Residue A2 is modified to N-acetylalanine. The short motif at 28 to 52 (CFLDCVKDFTTREVKPEEVTCSEHC) is the Twin CX3C motif element. 2 disulfide bridges follow: C28–C52 and C32–C48.

This sequence belongs to the small Tim family. Heterohexamer; composed of 3 copies of TIMM9 and 3 copies of TIMM10/TIM10A, named soluble 70 kDa complex. The complex forms a 6-bladed alpha-propeller structure and associates with the TIMM22 component of the TIM22 complex. Interacts with multi-pass transmembrane proteins in transit. Also forms a complex composed of TIMM9, TIMM10/TIM10A and FXC1/TIM10B.

The protein localises to the mitochondrion inner membrane. In terms of biological role, mitochondrial intermembrane chaperone that participates in the import and insertion of multi-pass transmembrane proteins into the mitochondrial inner membrane. May also be required for the transfer of beta-barrel precursors from the TOM complex to the sorting and assembly machinery (SAM complex) of the outer membrane. Acts as a chaperone-like protein that protects the hydrophobic precursors from aggregation and guide them through the mitochondrial intermembrane space. The sequence is that of Mitochondrial import inner membrane translocase subunit Tim9 (Timm9) from Rattus norvegicus (Rat).